Reading from the N-terminus, the 195-residue chain is Imidazoleglycerol-phosphate dehydratase (195 aa).

The protein belongs to the imidazoleglycerol-phosphate dehydratase family.

The protein localises to the cytoplasm. It catalyses the reaction D-erythro-1-(imidazol-4-yl)glycerol 3-phosphate = 3-(imidazol-4-yl)-2-oxopropyl phosphate + H2O. Its pathway is amino-acid biosynthesis; L-histidine biosynthesis; L-histidine from 5-phospho-alpha-D-ribose 1-diphosphate: step 6/9. This Cupriavidus pinatubonensis (strain JMP 134 / LMG 1197) (Cupriavidus necator (strain JMP 134)) protein is Imidazoleglycerol-phosphate dehydratase.